The primary structure comprises 509 residues: 2-isopropylmalate synthase (509 aa).

Residues 4–266 form the Pyruvate carboxyltransferase domain; sequence VRIFDTTLRD…YTGIKTEEIY (263 aa). D13, H201, H203, and N237 together coordinate Mn(2+). The interval 390 to 509 is regulatory domain; that stretch reads TLDYFHISTG…FDYQAKGEKQ (120 aa).

The protein belongs to the alpha-IPM synthase/homocitrate synthase family. LeuA type 1 subfamily. Homodimer. It depends on Mn(2+) as a cofactor.

Its subcellular location is the cytoplasm. The enzyme catalyses 3-methyl-2-oxobutanoate + acetyl-CoA + H2O = (2S)-2-isopropylmalate + CoA + H(+). It participates in amino-acid biosynthesis; L-leucine biosynthesis; L-leucine from 3-methyl-2-oxobutanoate: step 1/4. Catalyzes the condensation of the acetyl group of acetyl-CoA with 3-methyl-2-oxobutanoate (2-ketoisovalerate) to form 3-carboxy-3-hydroxy-4-methylpentanoate (2-isopropylmalate). The protein is 2-isopropylmalate synthase of Carboxydothermus hydrogenoformans (strain ATCC BAA-161 / DSM 6008 / Z-2901).